We begin with the raw amino-acid sequence, 564 residues long: 4-hydroxybutyrate--CoA ligase 1 (564 aa).

A helical transmembrane segment spans residues 105-125 (VHPMHWAVFLAVIKGGFVMVP). ATP-binding positions include 204–212 (TSGTTGMPK), 343–348 (DFYGQT), Asp429, and Arg444. Residue Thr348 participates in substrate binding. 452–454 (SDY) lines the CoA pocket. Arg455 serves as a coordination point for substrate. CoA-binding positions include Arg484, Lys513, and 521 to 523 (VPR). Lys538 is a binding site for ATP.

The protein belongs to the ATP-dependent AMP-binding enzyme family. Mg(2+) serves as cofactor. Mn(2+) is required as a cofactor.

The protein resides in the membrane. The catalysed reaction is 4-hydroxybutanoate + ATP + CoA = 4-hydroxybutanoyl-CoA + AMP + diphosphate. It catalyses the reaction acetate + ATP + CoA = acetyl-CoA + AMP + diphosphate. The enzyme catalyses propanoate + ATP + CoA = propanoyl-CoA + AMP + diphosphate. It carries out the reaction a medium-chain fatty acid + ATP + CoA = a medium-chain fatty acyl-CoA + AMP + diphosphate. Involved in the 3-hydroxypropionate/4-hydroxybutyrate cycle which incorporates carbon dioxide into cellular carbon. Catalyzes the ligation of coenzyme A (CoA) to 4-hydroxybutyrate (4HB). It can also use butyrate, valerate, propionate, acetate and 3-hydroxybutyrate (3HB) as substrates. This Metallosphaera sedula (strain ATCC 51363 / DSM 5348 / JCM 9185 / NBRC 15509 / TH2) protein is 4-hydroxybutyrate--CoA ligase 1.